The primary structure comprises 415 residues: Adipocyte plasma membrane-associated protein (415 aa).

Positions 1 to 30 (MNEAEGLRQRRPLRPQVITEDSPAQEAKEG) are disordered. Residues 1-39 (MNEAEGLRQRRPLRPQVITEDSPAQEAKEGSAYSSKVFR) lie on the Cytoplasmic side of the membrane. A helical membrane pass occupies residues 40–60 (VTFLTLAASLAVPLLGATVLL). The Extracellular segment spans residues 61–412 (DCPIDPQPIS…RSPFICRLNL (352 aa)). N-linked (GlcNAc...) asparagine glycosylation occurs at Asn-159.

This sequence belongs to the strictosidine synthase family.

Its subcellular location is the membrane. This is Adipocyte plasma membrane-associated protein (APMAP) from Gallus gallus (Chicken).